Consider the following 514-residue polypeptide: HERV-H LTR-associating protein 1 homolog (514 aa).

Residues 1–29 form the signal peptide; sequence MQSFLLHCPPIRLCMGLACILFLWNAVSG. N58, N97, N139, N161, N179, N200, N217, N232, and N321 each carry an N-linked (GlcNAc...) asparagine glycan. The disordered stretch occupies residues 379–420; it reads LHPTGILTTPSRLAQPSRASGTLMPGTQTTNPTQAPAPRVPQ. The segment covering 384-398 has biased composition (polar residues); the sequence is ILTTPSRLAQPSRAS. The segment covering 403-415 has biased composition (low complexity); the sequence is PGTQTTNPTQAPA.

The protein resides in the secreted. The sequence is that of HERV-H LTR-associating protein 1 homolog (Hhla1) from Mus musculus (Mouse).